Consider the following 197-residue polypeptide: MGLTISKLFSRLFAKKEMRILMVGLDAAGKTTILYKLKLGEIVTTIPTIGFNVETVEYKNISFTVWDVGGQDKIRPLWRHYFQNTQGLIFVVDSNDRDRVNEAREELMRMLAEDELRDAVLLVFANKQDLPNAMNAAEITDKLGLHSLRQRHWYIQSTCATSGEGLYEGLDWLSNQIRNQKANCNGTMLLWLLYPEK.

G2 carries the N-myristoyl glycine lipid modification. Residues 24–31 (GLDAAGKT), 67–71 (DVGGQ), and 126–129 (NKQD) contribute to the GTP site.

The protein belongs to the small GTPase superfamily. Arf family.

It localises to the golgi apparatus. The catalysed reaction is GTP + H2O = GDP + phosphate + H(+). Its function is as follows. GTP-binding protein involved in protein trafficking; may modulate vesicle budding and uncoating within the Golgi apparatus. The sequence is that of ADP-ribosylation factor 1 from Solanum tuberosum (Potato).